Consider the following 185-residue polypeptide: uncharacterized protein (185 aa).

The next 3 helical transmembrane spans lie at Leu32 to Phe52, Leu66 to Val86, and Ile155 to Val175.

It localises to the cell membrane. This is an uncharacterized protein from Bacillus subtilis (strain 168).